We begin with the raw amino-acid sequence, 338 residues long: Glyceraldehyde-3-phosphate dehydrogenase (338 aa).

NAD(+)-binding positions include 12-13, aspartate 38, and serine 125; that span reads RI. D-glyceraldehyde 3-phosphate-binding positions include 155–157, threonine 186, 216–217, and arginine 239; these read SCT and TG. Catalysis depends on cysteine 156, which acts as the Nucleophile. An NAD(+)-binding site is contributed by asparagine 320.

Belongs to the glyceraldehyde-3-phosphate dehydrogenase family. As to quaternary structure, homotetramer.

Its subcellular location is the cytoplasm. It carries out the reaction D-glyceraldehyde 3-phosphate + phosphate + NAD(+) = (2R)-3-phospho-glyceroyl phosphate + NADH + H(+). The protein operates within carbohydrate degradation; glycolysis; pyruvate from D-glyceraldehyde 3-phosphate: step 1/5. In terms of biological role, catalyzes the oxidative phosphorylation of glyceraldehyde 3-phosphate (G3P) to 1,3-bisphosphoglycerate (BPG) using the cofactor NAD. The first reaction step involves the formation of a hemiacetal intermediate between G3P and a cysteine residue, and this hemiacetal intermediate is then oxidized to a thioester, with concomitant reduction of NAD to NADH. The reduced NADH is then exchanged with the second NAD, and the thioester is attacked by a nucleophilic inorganic phosphate to produce BPG. The polypeptide is Glyceraldehyde-3-phosphate dehydrogenase (gap) (Lactobacillus delbrueckii subsp. bulgaricus).